The primary structure comprises 156 residues: Ribosomal RNA large subunit methyltransferase H (156 aa).

S-adenosyl-L-methionine contacts are provided by residues L73, G104, and 123-128; that span reads ISSMTL.

It belongs to the RNA methyltransferase RlmH family. Homodimer.

The protein localises to the cytoplasm. The enzyme catalyses pseudouridine(1915) in 23S rRNA + S-adenosyl-L-methionine = N(3)-methylpseudouridine(1915) in 23S rRNA + S-adenosyl-L-homocysteine + H(+). Specifically methylates the pseudouridine at position 1915 (m3Psi1915) in 23S rRNA. The protein is Ribosomal RNA large subunit methyltransferase H of Burkholderia lata (strain ATCC 17760 / DSM 23089 / LMG 22485 / NCIMB 9086 / R18194 / 383).